Consider the following 34-residue polypeptide: MINWQVIGQLTSLAMIVLVGPAVIVVLSLRKGDL.

Residues 6–26 form a helical membrane-spanning segment; that stretch reads VIGQLTSLAMIVLVGPAVIVV.

It belongs to the Psb30/Ycf12 family. PSII is composed of 1 copy each of membrane proteins PsbA, PsbB, PsbC, PsbD, PsbE, PsbF, PsbH, PsbI, PsbJ, PsbK, PsbL, PsbM, PsbT, PsbX, PsbY, PsbZ, Psb30/Ycf12, peripheral proteins of the oxygen-evolving complex and a large number of cofactors. It forms dimeric complexes.

The protein localises to the plastid. It is found in the chloroplast thylakoid membrane. Its function is as follows. A core subunit of photosystem II (PSII), probably helps stabilize the reaction center. This is Photosystem II reaction center protein Psb30 from Gracilaria tenuistipitata var. liui (Red alga).